Reading from the N-terminus, the 66-residue chain is Protein translocase subunit SecE (66 aa).

The chain crosses the membrane as a helical span at residues 29 to 49 (LVASTLVVVVAVFIFSLICLV).

Belongs to the SecE/SEC61-gamma family. Component of the Sec protein translocase complex. Heterotrimer consisting of SecY, SecE and SecG subunits. The heterotrimers can form oligomers, although 1 heterotrimer is thought to be able to translocate proteins. Interacts with the ribosome. Interacts with SecDF, and other proteins may be involved. Interacts with SecA.

Its subcellular location is the cell inner membrane. Functionally, essential subunit of the Sec protein translocation channel SecYEG. Clamps together the 2 halves of SecY. May contact the channel plug during translocation. The polypeptide is Protein translocase subunit SecE (Rickettsia felis (strain ATCC VR-1525 / URRWXCal2) (Rickettsia azadi)).